A 182-amino-acid polypeptide reads, in one-letter code: Adenine phosphoribosyltransferase (182 aa).

It belongs to the purine/pyrimidine phosphoribosyltransferase family. Homodimer.

The protein resides in the cytoplasm. It carries out the reaction AMP + diphosphate = 5-phospho-alpha-D-ribose 1-diphosphate + adenine. Its pathway is purine metabolism; AMP biosynthesis via salvage pathway; AMP from adenine: step 1/1. Catalyzes a salvage reaction resulting in the formation of AMP, that is energically less costly than de novo synthesis. This Campylobacter jejuni subsp. jejuni serotype O:23/36 (strain 81-176) protein is Adenine phosphoribosyltransferase.